The sequence spans 469 residues: 3-isopropylmalate dehydratase large subunit (469 aa).

[4Fe-4S] cluster-binding residues include C350, C410, and C413.

This sequence belongs to the aconitase/IPM isomerase family. LeuC type 1 subfamily. In terms of assembly, heterodimer of LeuC and LeuD. Requires [4Fe-4S] cluster as cofactor.

It catalyses the reaction (2R,3S)-3-isopropylmalate = (2S)-2-isopropylmalate. It participates in amino-acid biosynthesis; L-leucine biosynthesis; L-leucine from 3-methyl-2-oxobutanoate: step 2/4. In terms of biological role, catalyzes the isomerization between 2-isopropylmalate and 3-isopropylmalate, via the formation of 2-isopropylmaleate. The sequence is that of 3-isopropylmalate dehydratase large subunit from Allorhizobium ampelinum (strain ATCC BAA-846 / DSM 112012 / S4) (Agrobacterium vitis (strain S4)).